A 284-amino-acid chain; its full sequence is MLTLPAPAKLNLMLHIVGRRADGYHELQTLFQFLDHGDELSFSPREDGEIRLHTELPGVDHDSNLIVRAARLLQHESGCPQGADIHLLKRLPMGGGIGGGSSDAATALLGLNHLWQLHLEEDQLAELGLTLGADVPVFVRGRAAFAEGVGERLQPVELPEPWFLVIAPQVSVSTAEIFADPELTRNTPAITVRSLLAGGGHNDCQPIVEKRYPEVRNALSLLNKFVPASMTGTGACVFGSFPNEGEADKVRRQLPDTLPSFVARGRNVSMLHRCLEKLAQEVSA.

Residue Lys9 is part of the active site. Residue 92–102 participates in ATP binding; it reads PMGGGIGGGSS. Residue Asp134 is part of the active site.

Belongs to the GHMP kinase family. IspE subfamily.

It carries out the reaction 4-CDP-2-C-methyl-D-erythritol + ATP = 4-CDP-2-C-methyl-D-erythritol 2-phosphate + ADP + H(+). Its pathway is isoprenoid biosynthesis; isopentenyl diphosphate biosynthesis via DXP pathway; isopentenyl diphosphate from 1-deoxy-D-xylulose 5-phosphate: step 3/6. Functionally, catalyzes the phosphorylation of the position 2 hydroxy group of 4-diphosphocytidyl-2C-methyl-D-erythritol. The polypeptide is 4-diphosphocytidyl-2-C-methyl-D-erythritol kinase (Stutzerimonas stutzeri (strain A1501) (Pseudomonas stutzeri)).